Reading from the N-terminus, the 79-residue chain is Protein S100-G (79 aa).

S2 carries the N-acetylserine modification. EF-hand domains are found at residues 13–48 and 45–79; these read IFEK…KGPN and KGPN…KISQ. Ca(2+) contacts are provided by Q26 and E31. Position 42 is a phosphoserine (S42). Positions 58, 60, 62, 64, and 69 each coordinate Ca(2+).

Belongs to the S-100 family.

In Homo sapiens (Human), this protein is Protein S100-G (S100G).